Here is a 1499-residue protein sequence, read N- to C-terminus: Phospholipid-transporting ATPase VA (1499 aa).

The disordered stretch occupies residues 1-53 (MEREPAGTEEPGPPGRRRRREGRTRTVRSNLLPPPGAEDPAAGAAKGERRRRR). The Cytoplasmic segment spans residues 1-86 (MEREPAGTEE…KNLFEQFHRP (86 aa)). The segment covering 15–26 (GRRRRREGRTRT) has biased composition (basic residues). A helical membrane pass occupies residues 87–106 (ANVYFVFIALLNFVPAVNAF). At 107–110 (QPGL) the chain is on the exoplasmic loop side. The chain crosses the membrane as a helical span at residues 111-128 (ALAPVLFILAITAFRDLW). The Cytoplasmic segment spans residues 129–309 (EDYSRHRSDH…SKLERQMNCD (181 aa)). Residues 310–332 (VLWCVLLLVCMSLFSAVGHGLWI) form a helical membrane-spanning segment. The Exoplasmic loop portion of the chain corresponds to 333-362 (WRYQEKKSLFYVPKSDGSSLSPVTAAVYSF). A helical transmembrane segment spans residues 363-384 (LTMIIVLQVLIPISLYVSIEIV). The Cytoplasmic portion of the chain corresponds to 385–1087 (KACQVYFINQ…GHWCYSRLAN (703 aa)). Catalysis depends on Asp-427, which acts as the 4-aspartylphosphate intermediate. ATP-binding residues include Asp-427, Lys-428, and Thr-429. Residue Asp-427 participates in Mg(2+) binding. A Mg(2+)-binding site is contributed by Thr-429. A disordered region spans residues 464–531 (ADSEEEEVVP…AFSSPMEKDI (68 aa)). Ser-466 carries the phosphoserine modification. Residues 477-499 (SVSQRGSIGSHQSVRVVHRTQST) show a composition bias toward polar residues. Positions 700, 742, 766, 809, 889, 890, 891, 1005, and 1011 each coordinate ATP. Position 1031 (Asp-1031) interacts with Mg(2+). ATP-binding residues include Asn-1034 and Asp-1035. Asp-1035 provides a ligand contact to Mg(2+). A helical membrane pass occupies residues 1088-1108 (MVLYFFYKNTMFVGLLFWFQF). The Exoplasmic loop segment spans residues 1109–1119 (FCGFSASTMID). Residues 1120–1140 (QWYLIFFNLLFSSLPPLVTGV) form a helical membrane-spanning segment. Residues 1141–1170 (LDRDVPANVLLTNPQLYKSGQNMEEYRPRT) are Cytoplasmic-facing. The helical transmembrane segment at 1171 to 1192 (FWFNMADAAFQSLVCFSIPYLA) threads the bilayer. Residues 1193–1199 (YYDSNVD) lie on the Exoplasmic loop side of the membrane. Residues 1200–1222 (LFTWGTPIVTIALLTFLLHLGIE) form a helical membrane-spanning segment. Residues 1223–1228 (TKTWTW) lie on the Cytoplasmic side of the membrane. The chain crosses the membrane as a helical span at residues 1229–1249 (LNWITCGFSVLLFFTVALIYN). The Exoplasmic loop portion of the chain corresponds to 1250–1267 (ASCATCYPPSNPYWTMQA). The chain crosses the membrane as a helical span at residues 1268–1292 (LLGDPVFYLTCLMTPVAALLPRLFF). At 1293–1499 (RSLQGRVFPT…LIGASSRRSQ (207 aa)) the chain is on the cytoplasmic side. Disordered regions lie at residues 1311–1356 (TRKS…PSWH) and 1464–1499 (DGQA…RRSQ). Basic and acidic residues predominate over residues 1330–1340 (LPKDSGTEHSS). Over residues 1341–1356 (GRTVKTSVPLSQPSWH) the composition is skewed to polar residues.

This sequence belongs to the cation transport ATPase (P-type) (TC 3.A.3) family. Type IV subfamily. Component of a P4-ATPase flippase complex which consists of a catalytic alpha subunit ATP10A and an accessory beta subunit TMEM30A. The cofactor is Mg(2+). Autophosphorylated at the conserved aspartate of the P-type ATPase signature sequence. In terms of tissue distribution, widely expressed, with highest levels in kidney, followed by lung, brain, prostate, testis, ovary and small intestine.

It is found in the cell membrane. The protein localises to the endoplasmic reticulum membrane. The catalysed reaction is ATP + H2O + phospholipidSide 1 = ADP + phosphate + phospholipidSide 2.. The enzyme catalyses a 1,2-diacyl-sn-glycero-3-phosphocholine(out) + ATP + H2O = a 1,2-diacyl-sn-glycero-3-phosphocholine(in) + ADP + phosphate + H(+). It catalyses the reaction a beta-D-glucosyl-(1&lt;-&gt;1')-N-acylsphing-4-enine(out) + ATP + H2O = a beta-D-glucosyl-(1&lt;-&gt;1')-N-acylsphing-4-enine(in) + ADP + phosphate + H(+). Inhibited under hypotonic conditions. Catalytic component of P4-ATPase flippase complex, which catalyzes the hydrolysis of ATP coupled to the transport of phosphatidylcholine (PC) from the outer to the inner leaflet of the plasma membrane. Initiates inward plasma membrane bending and recruitment of Bin/amphiphysin/Rvs (BAR) domain-containing proteins involved in membrane tubulation and cell trafficking. Facilitates ITGB1/beta1 integrin endocytosis, delaying cell adhesion and cell spreading on extracellular matrix. Has low flippase activity toward glucosylceramide (GlcCer). This Homo sapiens (Human) protein is Phospholipid-transporting ATPase VA.